Reading from the N-terminus, the 375-residue chain is Cobalt-precorrin-5B C(1)-methyltransferase (375 aa).

Belongs to the CbiD family.

The enzyme catalyses Co-precorrin-5B + S-adenosyl-L-methionine = Co-precorrin-6A + S-adenosyl-L-homocysteine. It functions in the pathway cofactor biosynthesis; adenosylcobalamin biosynthesis; cob(II)yrinate a,c-diamide from sirohydrochlorin (anaerobic route): step 6/10. Catalyzes the methylation of C-1 in cobalt-precorrin-5B to form cobalt-precorrin-6A. The polypeptide is Cobalt-precorrin-5B C(1)-methyltransferase (Paracidovorax citrulli (strain AAC00-1) (Acidovorax citrulli)).